Here is a 96-residue protein sequence, read N- to C-terminus: Protein CLAVATA 3 (96 aa).

Residues 1–21 (MDSKSFLLLLLLFCFLFLHDA) form the signal peptide. The segment at 68–96 (ELRTVPSGPDPLHHHVNPPRQPRNNFQLP) is disordered. Hydroxyproline is present on residues proline 73 and proline 76. Proline 76 carries an O-linked (Ara...) hydroxyproline glycan.

It belongs to the CLV3/ESR signal peptide family. In terms of assembly, interacts with the extracellular leucine-rich repeat region of CLV1. Interacts with CLV2. CLV3-derived CLE peptides interacts with a tetrameric complex made of two CLV2/CRN heterodimers. The MCLV3 peptide contains two hydroxyprolines, but hydroxylation had no direct effect on MCLV3 activity. Post-translationally, the O-glycosylation (arabinosylation) of the hydroxyproline P-76 enhances binding affinity of the MCLV3 peptide for its receptor. In terms of tissue distribution, first detected in heart stage embryos in a patch of cells between the developing cotyledons. In vegetative and inflorescence meristems, expressed in a small cone of cells at the meristem apex.

The protein localises to the secreted. It localises to the extracellular space. Extracellular signal that regulates meristem maintenance. Acts with CLV1 as a ligand-receptor pair in a signal transduction pathway coordinating growth between adjacent meristematic regions and controlling the balance between meristem cell proliferation and differentiation. In terms of biological role, the secreted peptide MCLV3 activates a signal transduction cascade to restrict WUSCHEL (WUS) expression, inducing shoot and root meristem consumption as cells differentiated into other organs. The polypeptide is Protein CLAVATA 3 (Arabidopsis thaliana (Mouse-ear cress)).